Consider the following 220-residue polypeptide: Riboflavin kinase (220 aa).

The segment at 1–92 is H-T-H motif-like; the sequence is MDTSDQYYRA…LSRILSIKSN (92 aa). Residues 93–220 are riboflavin kinase; the sequence is IVMTGIVVPG…GDEVTIEVTA (128 aa). Position 102-107 (102-107) interacts with CDP; sequence GMGEGK. T131 and N133 together coordinate Mg(2+). FMN contacts are provided by T188 and E195. Position 200–203 (200–203) interacts with CDP; that stretch reads KYLR.

The protein belongs to the archaeal riboflavin kinase family. Requires Mg(2+) as cofactor.

It carries out the reaction riboflavin + CTP = CDP + FMN + H(+). It functions in the pathway cofactor biosynthesis; FMN biosynthesis; FMN from riboflavin (CTP route): step 1/1. Catalyzes the CTP-dependent phosphorylation of riboflavin (vitamin B2) to form flavin mononucleotide (FMN). In Thermoplasma volcanium (strain ATCC 51530 / DSM 4299 / JCM 9571 / NBRC 15438 / GSS1), this protein is Riboflavin kinase (ribK).